The primary structure comprises 880 residues: Translation initiation factor IF-2 (880 aa).

Composition is skewed to basic and acidic residues over residues 180–194 (QEAA…EAAK) and 202–228 (LAEE…DHHI). Residues 180-289 (QEAATKRKQD…APESMAHGFN (110 aa)) are disordered. Basic residues predominate over residues 249 to 262 (GRRARNKSNAKKRG). A tr-type G domain is found at 380–549 (SRAPVVTIMG…LLQAEVLELK (170 aa)). A G1 region spans residues 389–396 (GHVDHGKT). 389–396 (GHVDHGKT) contributes to the GTP binding site. Residues 414 to 418 (GITQH) are G2. Positions 435 to 438 (DTPG) are G3. GTP-binding positions include 435–439 (DTPGH) and 489–492 (NKMD). The interval 489–492 (NKMD) is G4. Residues 525–527 (SAK) are G5.

Belongs to the TRAFAC class translation factor GTPase superfamily. Classic translation factor GTPase family. IF-2 subfamily.

It localises to the cytoplasm. In terms of biological role, one of the essential components for the initiation of protein synthesis. Protects formylmethionyl-tRNA from spontaneous hydrolysis and promotes its binding to the 30S ribosomal subunits. Also involved in the hydrolysis of GTP during the formation of the 70S ribosomal complex. This is Translation initiation factor IF-2 from Shewanella baltica (strain OS223).